Here is a 686-residue protein sequence, read N- to C-terminus: Glycine--tRNA ligase beta subunit (686 aa).

The protein belongs to the class-II aminoacyl-tRNA synthetase family. In terms of assembly, tetramer of two alpha and two beta subunits.

The protein resides in the cytoplasm. It catalyses the reaction tRNA(Gly) + glycine + ATP = glycyl-tRNA(Gly) + AMP + diphosphate. The chain is Glycine--tRNA ligase beta subunit from Geobacter metallireducens (strain ATCC 53774 / DSM 7210 / GS-15).